Reading from the N-terminus, the 142-residue chain is MAKKVQAYVKLQVAAGMANPSPPVGPALGQQGVNIMEFCKAFNAKTESVEKGLPIPVVITVYSDRSFTFVTKTPPAAVLLKKAAGIKSGSGKPNKDKVGKVTSAQVREIAETKAADMTGSDVDAMARSIAGTARSMGLVVED.

Belongs to the universal ribosomal protein uL11 family. As to quaternary structure, part of the ribosomal stalk of the 50S ribosomal subunit. Interacts with L10 and the large rRNA to form the base of the stalk. L10 forms an elongated spine to which L12 dimers bind in a sequential fashion forming a multimeric L10(L12)X complex. In terms of processing, one or more lysine residues are methylated.

Forms part of the ribosomal stalk which helps the ribosome interact with GTP-bound translation factors. The protein is Large ribosomal subunit protein uL11 of Pectobacterium carotovorum subsp. carotovorum (strain PC1).